The primary structure comprises 185 residues: ATP synthase subunit b 2 (185 aa).

Residues 1–23 (MAEGHGDAKGATAHTAADGGHKA) form a disordered region. Residues 9 to 18 (KGATAHTAAD) are compositionally biased toward low complexity. A helical transmembrane segment spans residues 32–51 (TFASQLVSLTIAFVALYLIV).

This sequence belongs to the ATPase B chain family. F-type ATPases have 2 components, F(1) - the catalytic core - and F(0) - the membrane proton channel. F(1) has five subunits: alpha(3), beta(3), gamma(1), delta(1), epsilon(1). F(0) has three main subunits: a(1), b(2) and c(10-14). The alpha and beta chains form an alternating ring which encloses part of the gamma chain. F(1) is attached to F(0) by a central stalk formed by the gamma and epsilon chains, while a peripheral stalk is formed by the delta and b chains.

The protein resides in the cell inner membrane. Functionally, f(1)F(0) ATP synthase produces ATP from ADP in the presence of a proton or sodium gradient. F-type ATPases consist of two structural domains, F(1) containing the extramembraneous catalytic core and F(0) containing the membrane proton channel, linked together by a central stalk and a peripheral stalk. During catalysis, ATP synthesis in the catalytic domain of F(1) is coupled via a rotary mechanism of the central stalk subunits to proton translocation. Component of the F(0) channel, it forms part of the peripheral stalk, linking F(1) to F(0). The b'-subunit is a diverged and duplicated form of b found in plants and photosynthetic bacteria. This Rhodopseudomonas palustris (strain HaA2) protein is ATP synthase subunit b 2 (atpF2).